Here is a 349-residue protein sequence, read N- to C-terminus: MIEFDNLTYLHGKPQGTGLLKANPEDFVVVEDLGFEPDGEGEHILVRILKNGCNTRFVADALAKFLKIHAREVSFAGQKDKHAVTEQWLCARVPGKEMPDLSAFQLEGCQVLEYARHKRKLRLGALKGNAFTLVLREVSNRDDVEQRLIDICVKGVPNYFGAQRFGIGGSNLQGALRWAQTNTPVRDRNKRSFWLSAARSALFNQIVAERLKKADVNQVVDGDALQLAGRGSWFVATTEELAELQHRVNDKELMITAALPGSGEWGTQRKALAFEQAAVAAETELQALLVREKVEAARRAMLLYPQQLSWNWWDDVTVEIRFWLPAGSFATSVVRELINTTGDYAHIAE.

Phenylalanine 27 serves as a coordination point for substrate. Aspartate 80 (nucleophile) is an active-site residue. A substrate-binding site is contributed by asparagine 129. The TRUD domain maps to 155 to 303 (GVPNYFGAQR…VEAARRAMLL (149 aa)). Phenylalanine 329 provides a ligand contact to substrate.

It belongs to the pseudouridine synthase TruD family.

The catalysed reaction is uridine(13) in tRNA = pseudouridine(13) in tRNA. Responsible for synthesis of pseudouridine from uracil-13 in transfer RNAs. This chain is tRNA pseudouridine synthase D, found in Shigella boydii serotype 4 (strain Sb227).